The chain runs to 126 residues: Large ribosomal subunit protein bL12 (126 aa).

The protein belongs to the bacterial ribosomal protein bL12 family. Homodimer. Part of the ribosomal stalk of the 50S ribosomal subunit. Forms a multimeric L10(L12)X complex, where L10 forms an elongated spine to which 2 to 4 L12 dimers bind in a sequential fashion. Binds GTP-bound translation factors.

In terms of biological role, forms part of the ribosomal stalk which helps the ribosome interact with GTP-bound translation factors. Is thus essential for accurate translation. The polypeptide is Large ribosomal subunit protein bL12 (Chlorobaculum tepidum (strain ATCC 49652 / DSM 12025 / NBRC 103806 / TLS) (Chlorobium tepidum)).